The chain runs to 293 residues: Aquaporin-6 (293 aa).

At 1-22 (MEPGLCSRAYLLVGGLWTAISK) the chain is on the cytoplasmic side. Residues 23–43 (ALFAEFLATGLYVFFGVGSVL) form a helical membrane-spanning segment. At 44–51 (PWPVALPS) the chain is on the extracellular side. The chain crosses the membrane as a helical span at residues 52 to 70 (VLQIAITFNLATATAVQIS). Over 71–75 (WKTSG) the chain is Cytoplasmic. Positions 76-85 (AHANPAVTLA) form an intramembrane region, discontinuously helical. The NPA 1 signature appears at 79–81 (NPA). The Cytoplasmic portion of the chain corresponds to 86–96 (YLVGSHISLPR). A helical transmembrane segment spans residues 97–118 (AMAYIAAQLAGATAGAALLYGV). Residues 119–138 (TPGGIRETLGVNVVHNSTST) lie on the Extracellular side of the membrane. Asn134 carries an N-linked (GlcNAc...) asparagine glycan. The helical transmembrane segment at 139–159 (GQAVAVELVLTLQLVLCVFAS) threads the bilayer. Residues 160–165 (MDGRQT) are Cytoplasmic-facing. Residues 166 to 185 (LASPAAMIGTSVALGHLIGI) form a helical membrane-spanning segment. The Extracellular portion of the chain corresponds to 186–189 (YFTG). Residues 190-202 (CSMNPARSFGPAV) constitute an intramembrane region (discontinuously helical). The NPA 2 motif lies at 193 to 195 (NPA). Residues 203 to 210 (IVGKFAVH) are Extracellular-facing. Residues 211–231 (WIFWVGPLTGAVLASLIYNFI) traverse the membrane as a helical segment. At 232–293 (LFPDTKTVAQ…RSFSFTLGLC (62 aa)) the chain is on the cytoplasmic side.

Belongs to the MIP/aquaporin (TC 1.A.8) family. In terms of assembly, homotetramer; each monomer provides an independent solute pore.

It localises to the cytoplasmic vesicle membrane. It carries out the reaction nitrate(in) = nitrate(out). The enzyme catalyses iodide(out) = iodide(in). It catalyses the reaction bromide(in) = bromide(out). The catalysed reaction is chloride(in) = chloride(out). It carries out the reaction Na(+)(in) = Na(+)(out). The enzyme catalyses H2O(in) = H2O(out). It catalyses the reaction CO2(out) = CO2(in). The catalysed reaction is NH4(+)(in) = NH4(+)(out). In terms of biological role, aquaporins form homotetrameric transmembrane channels, with each monomer independently mediating water transport across the plasma membrane along its osmotic gradient. Unlike classical aquaporins, AQP6 is an intracellular channel with selective anion permeability, particularly for nitrate, and exhibits very low water permeability. It may also facilitate the transport of gases, such as CO2 and NH4(+), as demonstrated in vitro. The protein is Aquaporin-6 of Mus musculus (Mouse).